A 566-amino-acid polypeptide reads, in one-letter code: Glutamate--tRNA ligase (566 aa).

A 'HIGH' region motif is present at residues Pro104 to Asn114.

Belongs to the class-I aminoacyl-tRNA synthetase family. Glutamate--tRNA ligase type 2 subfamily.

The protein localises to the cytoplasm. It carries out the reaction tRNA(Glu) + L-glutamate + ATP = L-glutamyl-tRNA(Glu) + AMP + diphosphate. Functionally, catalyzes the attachment of glutamate to tRNA(Glu) in a two-step reaction: glutamate is first activated by ATP to form Glu-AMP and then transferred to the acceptor end of tRNA(Glu). The protein is Glutamate--tRNA ligase of Metallosphaera sedula (strain ATCC 51363 / DSM 5348 / JCM 9185 / NBRC 15509 / TH2).